Here is a 99-residue protein sequence, read N- to C-terminus: RNA-binding protein HI_1333 (99 aa).

The CRM domain occupies 2-98 (TTLSTKQKQF…SEEAKIQLPR (97 aa)).

This is RNA-binding protein HI_1333 from Haemophilus influenzae (strain ATCC 51907 / DSM 11121 / KW20 / Rd).